A 40-amino-acid chain; its full sequence is Photosystem II reaction center protein J (40 aa).

A helical membrane pass occupies residues 8–28 (IPLWVIGTVAGILVIGIIGIF).

Belongs to the PsbJ family. As to quaternary structure, PSII is composed of 1 copy each of membrane proteins PsbA, PsbB, PsbC, PsbD, PsbE, PsbF, PsbH, PsbI, PsbJ, PsbK, PsbL, PsbM, PsbT, PsbX, PsbY, PsbZ, Psb30/Ycf12, at least 3 peripheral proteins of the oxygen-evolving complex and a large number of cofactors. It forms dimeric complexes.

The protein localises to the plastid. It is found in the chloroplast thylakoid membrane. In terms of biological role, one of the components of the core complex of photosystem II (PSII). PSII is a light-driven water:plastoquinone oxidoreductase that uses light energy to abstract electrons from H(2)O, generating O(2) and a proton gradient subsequently used for ATP formation. It consists of a core antenna complex that captures photons, and an electron transfer chain that converts photonic excitation into a charge separation. The polypeptide is Photosystem II reaction center protein J (Lobularia maritima (Sweet alyssum)).